The primary structure comprises 341 residues: L-threonine 3-dehydrogenase (341 aa).

Residue cysteine 38 coordinates Zn(2+). Catalysis depends on charge relay system residues threonine 40 and histidine 43. Zn(2+)-binding residues include histidine 63, glutamate 64, cysteine 93, cysteine 96, cysteine 99, and cysteine 107. NAD(+)-binding positions include isoleucine 175, aspartate 195, arginine 200, 262–264, and 286–287; these read LGI and IY.

This sequence belongs to the zinc-containing alcohol dehydrogenase family. In terms of assembly, homotetramer. It depends on Zn(2+) as a cofactor.

Its subcellular location is the cytoplasm. It catalyses the reaction L-threonine + NAD(+) = (2S)-2-amino-3-oxobutanoate + NADH + H(+). It functions in the pathway amino-acid degradation; L-threonine degradation via oxydo-reductase pathway; glycine from L-threonine: step 1/2. Its function is as follows. Catalyzes the NAD(+)-dependent oxidation of L-threonine to 2-amino-3-ketobutyrate. This chain is L-threonine 3-dehydrogenase, found in Shewanella pealeana (strain ATCC 700345 / ANG-SQ1).